A 469-amino-acid chain; its full sequence is Neuraminidase (469 aa).

Over 1-9 (MNPNQKIIT) the chain is Intravirion. Residues 10–30 (IGSVSLTIATVCFLMQIAILV) traverse the membrane as a helical segment. The involved in apical transport and lipid raft association stretch occupies residues 11 to 33 (GSVSLTIATVCFLMQIAILVTTV). The Virion surface portion of the chain corresponds to 31-469 (TTVTLHFKQY…DGANINFMPI (439 aa)). The segment at 36-88 (HFKQYECDSPASNQVMPCEPIIIERNITEIVYLNNTTIDKEKCPKVVEYRNWS) is hypervariable stalk region. 4 N-linked (GlcNAc...) asparagine; by host glycosylation sites follow: Asn-61, Asn-69, Asn-70, and Asn-86. Residues 91 to 469 (QCQITGFAPF…DGANINFMPI (379 aa)) form a head of neuraminidase region. 8 disulfide bridges follow: Cys-92/Cys-417, Cys-124/Cys-129, Cys-183/Cys-230, Cys-232/Cys-237, Cys-278/Cys-291, Cys-280/Cys-289, Cys-318/Cys-337, and Cys-421/Cys-447. Arg-118 provides a ligand contact to substrate. N-linked (GlcNAc...) asparagine; by host glycosylation is present at Asn-146. Asp-151 functions as the Proton donor/acceptor in the catalytic mechanism. Arg-152 is a binding site for substrate. N-linked (GlcNAc...) asparagine; by host glycans are attached at residues Asn-200 and Asn-234. 276–277 (EE) serves as a coordination point for substrate. Substrate is bound at residue Arg-292. Ca(2+) is bound by residues Asp-293, Gly-297, and Asp-324. Residues 324-350 (DTPRNDDRSSNSNCRNPNNERGNQGVK) form a disordered region. Positions 333–342 (SNSNCRNPNN) are enriched in low complexity. Residue Arg-371 participates in substrate binding. N-linked (GlcNAc...) asparagine; by host glycosylation occurs at Asn-402. Residue Tyr-406 is the Nucleophile of the active site.

It belongs to the glycosyl hydrolase 34 family. Homotetramer. Requires Ca(2+) as cofactor. Post-translationally, N-glycosylated.

The protein localises to the virion membrane. Its subcellular location is the host apical cell membrane. It carries out the reaction Hydrolysis of alpha-(2-&gt;3)-, alpha-(2-&gt;6)-, alpha-(2-&gt;8)- glycosidic linkages of terminal sialic acid residues in oligosaccharides, glycoproteins, glycolipids, colominic acid and synthetic substrates.. With respect to regulation, inhibited by the neuraminidase inhibitors zanamivir (Relenza) and oseltamivir (Tamiflu). These drugs interfere with the release of progeny virus from infected cells and are effective against all influenza strains. Resistance to neuraminidase inhibitors is quite rare. Its function is as follows. Catalyzes the removal of terminal sialic acid residues from viral and cellular glycoconjugates. Cleaves off the terminal sialic acids on the glycosylated HA during virus budding to facilitate virus release. Additionally helps virus spread through the circulation by further removing sialic acids from the cell surface. These cleavages prevent self-aggregation and ensure the efficient spread of the progeny virus from cell to cell. Otherwise, infection would be limited to one round of replication. Described as a receptor-destroying enzyme because it cleaves a terminal sialic acid from the cellular receptors. May facilitate viral invasion of the upper airways by cleaving the sialic acid moieties on the mucin of the airway epithelial cells. Likely to plays a role in the budding process through its association with lipid rafts during intracellular transport. May additionally display a raft-association independent effect on budding. Plays a role in the determination of host range restriction on replication and virulence. Sialidase activity in late endosome/lysosome traffic seems to enhance virus replication. This Aves (whales) protein is Neuraminidase.